Consider the following 62-residue polypeptide: Large ribosomal subunit protein bL32 (62 aa).

A compositionally biased stretch (basic residues) spans 1–16 (MAVPKRKTSPMKRGFR). A disordered region spans residues 1–62 (MAVPKRKTSP…QILTPKNKEA (62 aa)). The span at 28 to 44 (VEDKDSGELRRPHHVDL) shows a compositional bias: basic and acidic residues.

It belongs to the bacterial ribosomal protein bL32 family.

This is Large ribosomal subunit protein bL32 from Methylocella silvestris (strain DSM 15510 / CIP 108128 / LMG 27833 / NCIMB 13906 / BL2).